Here is a 142-residue protein sequence, read N- to C-terminus: Membrane protein YneK (142 aa).

A helical transmembrane segment spans residues 6 to 26 (FLWFILFWVIMMVVLLSIGGF).

Interacts with the N-terminal D1 domain of dynamin-like protein DynA.

It localises to the cell membrane. The sequence is that of Membrane protein YneK (yneK) from Bacillus subtilis (strain 168).